We begin with the raw amino-acid sequence, 105 residues long: Nitrogen fixation nifHD region GlnB-like protein 1 (105 aa).

This sequence belongs to the P(II) protein family.

In terms of biological role, could be involved in the regulation of nitrogen fixation. The sequence is that of Nitrogen fixation nifHD region GlnB-like protein 1 (glnBA) from Methanobacterium ivanovii.